Here is a 245-residue protein sequence, read N- to C-terminus: Fibroblast growth factor 13 (245 aa).

The segment at 1-36 (MAAAIASSLIRQKRQAREREKSNACKCVSSPSKGKT) is disordered. The interval 1–62 (MAAAIASSLI…GSKKRRRRRP (62 aa)) is mediates targeting to the nucleus. The segment at 67–201 (KGIVTKLYSR…AHFLPKPLKV (135 aa)) is mediates interaction with sodium channels. Residues 157 to 164 (SMIYRQQQ) are tubulin-binding domain necessary and sufficient for tubulin-binding. A Phosphoserine modification is found at Ser208. Residues 213 to 245 (TEFSRSGSGTPTKSRSVSGVLNGGKSMSHNEST) are disordered. The span at 215 to 245 (FSRSGSGTPTKSRSVSGVLNGGKSMSHNEST) shows a compositional bias: polar residues.

It belongs to the heparin-binding growth factors family. As to quaternary structure, interacts with SCN8A; regulates SCN8A activity. Interacts with SCN1A; may regulate SCN1A activity. Interacts with SCN5A; the interaction is direct and may regulate SNC5A density at membranes and function. May also interact with SCN2A and SCN11A. Interacts with MAPK8IP2; may regulate the MAPK8IP2 scaffolding activity. May be phosphorylated. Detected in brain, eye and heart. In brain, the different isoforms display different patterns of expression. Expressed in brain and heart (at protein level). Isoform 3 is highly expressed in cardiac myocytes while isoform 1 is the most abundant in brain.

It is found in the cell projection. It localises to the filopodium. Its subcellular location is the growth cone. The protein resides in the dendrite. The protein localises to the cell membrane. It is found in the sarcolemma. It localises to the cytoplasm. Its subcellular location is the nucleus. Microtubule-binding protein which directly binds tubulin and is involved in both polymerization and stabilization of microtubules. Through its action on microtubules, may participate to the refinement of axons by negatively regulating axonal and leading processes branching. Plays a crucial role in neuron polarization and migration in the cerebral cortex and the hippocampus. Regulates voltage-gated sodium channel transport and function. May also play a role in MAPK signaling. Required for the development of axonal initial segment-targeting inhibitory GABAergic synapses made by chandelier neurons. In terms of biological role, seems not to be involved in neuroblast polarization and migration but regulates axon branching. The sequence is that of Fibroblast growth factor 13 from Mus musculus (Mouse).